The sequence spans 234 residues: Transcription factor UDT1 (234 aa).

The disordered stretch occupies residues M1–Q51. A compositionally biased stretch (acidic residues) spans G37–Q48. The basic motif; degenerate stretch occupies residues E61–R74. Positions E61–L110 constitute a bHLH domain. Residues G75–L110 form a helix-loop-helix motif region.

Belongs to the bHLH protein family.

The protein resides in the nucleus. Transcription factor that plays a crucial role in tapetum development. Required for male fertility and pollen differentiation within the developing anther. Plays a major role in maintaining tapetum development, starting in early meiosis. Required for pollen mother cell meiosis. May regulate the anther-specific cysteine protease CP1 and lipid-transfer proteins C4 and C6. Required for anther development. Functions in parallel with GAMYB to regulate early anther development. Functions upstream of the transcription factor TDR and may positively regulate its transcription. The protein is Transcription factor UDT1 of Oryza sativa subsp. japonica (Rice).